Consider the following 156-residue polypeptide: Protein SprT (156 aa).

One can recognise a SprT-like domain in the interval 15–153 (NRYFNKHFTP…CKKCKEILVL (139 aa)). Residue H67 participates in Zn(2+) binding. Residue E68 is part of the active site. Residue H71 coordinates Zn(2+).

The protein belongs to the SprT family. The cofactor is Zn(2+).

It is found in the cytoplasm. This Glaesserella parasuis serovar 5 (strain SH0165) (Haemophilus parasuis) protein is Protein SprT.